We begin with the raw amino-acid sequence, 506 residues long: Arylsulfatase A (506 aa).

A signal peptide spans 1–17 (MALGTLFLALAAGLSTA). Ca(2+) contacts are provided by Asp-28, Asp-29, and Cys-68. Catalysis depends on Cys-68, which acts as the Nucleophile. Cys-68 is subject to 3-oxoalanine (Cys). A substrate-binding site is contributed by Lys-122. His-124 is an active-site residue. A substrate-binding site is contributed by Ser-149. 2 disulfides stabilise this stretch: Cys-155/Cys-171 and Cys-160/Cys-167. N-linked (GlcNAc...) asparagine glycosylation is present at Asn-157. N-linked (GlcNAc...) asparagine glycosylation occurs at Asn-183. His-228 contacts substrate. Ca(2+) contacts are provided by Asp-280 and Asn-281. 4 disulfides stabilise this stretch: Cys-299–Cys-413, Cys-487–Cys-499, Cys-488–Cys-501, and Cys-492–Cys-498. Lys-301 contacts substrate. Residue Asn-349 is glycosylated (N-linked (GlcNAc...) asparagine).

Belongs to the sulfatase family. In terms of assembly, homodimer at neutral pH and homooctamer at acidic pH. Exists both as a single chain of 58 kDa (component A) or as a chain of 50 kDa (component B) linked by disulfide bond(s) to a 7 kDa chain (component C). Interacts with SUMF1. Ca(2+) is required as a cofactor. Post-translationally, the conversion to 3-oxoalanine (also known as C-formylglycine, FGly), of a serine or cysteine residue in prokaryotes and of a cysteine residue in eukaryotes, is critical for catalytic activity. This post-translational modification is severely defective in multiple sulfatase deficiency (MSD).

The protein resides in the endoplasmic reticulum. Its subcellular location is the lysosome. It carries out the reaction an N-acyl-1-beta-D-(3-O-sulfo)-galactosyl-sphing-4-enine + H2O = a beta-D-galactosyl-(1&lt;-&gt;1')-N-acylsphing-4-enine + sulfate + H(+). Hydrolyzes cerebroside sulfate. This is Arylsulfatase A (Arsa) from Mus musculus (Mouse).